A 229-amino-acid chain; its full sequence is Large ribosomal subunit protein uL1 (229 aa).

It belongs to the universal ribosomal protein uL1 family. In terms of assembly, part of the 50S ribosomal subunit.

Functionally, binds directly to 23S rRNA. The L1 stalk is quite mobile in the ribosome, and is involved in E site tRNA release. Protein L1 is also a translational repressor protein, it controls the translation of the L11 operon by binding to its mRNA. The sequence is that of Large ribosomal subunit protein uL1 from Lactococcus lactis subsp. lactis (strain IL1403) (Streptococcus lactis).